The sequence spans 277 residues: Energy-coupling factor transporter ATP-binding protein EcfA (277 aa).

In terms of domain architecture, ABC transporter spans 4–238 (LETRDLTHIY…PELLTQTRLD (235 aa)). 37–44 (GPNGAGKS) serves as a coordination point for ATP.

Belongs to the ABC transporter superfamily. Energy-coupling factor EcfA family. Forms a stable energy-coupling factor (ECF) transporter complex composed of 2 membrane-embedded substrate-binding proteins (S component), 2 ATP-binding proteins (A component) and 2 transmembrane proteins (T component).

It is found in the cell membrane. Functionally, ATP-binding (A) component of a common energy-coupling factor (ECF) ABC-transporter complex. Unlike classic ABC transporters this ECF transporter provides the energy necessary to transport a number of different substrates. This Methanoculleus marisnigri (strain ATCC 35101 / DSM 1498 / JR1) protein is Energy-coupling factor transporter ATP-binding protein EcfA.